Reading from the N-terminus, the 366-residue chain is Protein BIG GRAIN 1-like B (366 aa).

2 disordered regions span residues 42–73 and 129–148; these read DSSTNSSSMRKTKHQNREDTRVSANRRDDFNR and FERSPQNHRPNSSNKQEHGS. Residues 56-73 show a composition bias toward basic and acidic residues; sequence QNREDTRVSANRRDDFNR.

This sequence belongs to the BIG GRAIN 1 (BG1) plant protein family.

The protein resides in the cell membrane. Functionally, involved in auxin transport. Regulator of the auxin signaling pathway. The sequence is that of Protein BIG GRAIN 1-like B from Arabidopsis thaliana (Mouse-ear cress).